The following is a 366-amino-acid chain: Anthranilate phosphoribosyltransferase (366 aa).

5-phospho-alpha-D-ribose 1-diphosphate is bound by residues G103, 106–107 (GD), T111, 113–116 (NLST), 131–139 (KHGNRASSS), and G143. G103 serves as a coordination point for anthranilate. Mg(2+) is bound at residue S115. An anthranilate-binding site is contributed by N134. An anthranilate-binding site is contributed by R189. Residues D247 and E248 each contribute to the Mg(2+) site.

The protein belongs to the anthranilate phosphoribosyltransferase family. As to quaternary structure, homodimer. Mg(2+) is required as a cofactor.

The catalysed reaction is N-(5-phospho-beta-D-ribosyl)anthranilate + diphosphate = 5-phospho-alpha-D-ribose 1-diphosphate + anthranilate. Its pathway is amino-acid biosynthesis; L-tryptophan biosynthesis; L-tryptophan from chorismate: step 2/5. Functionally, catalyzes the transfer of the phosphoribosyl group of 5-phosphorylribose-1-pyrophosphate (PRPP) to anthranilate to yield N-(5'-phosphoribosyl)-anthranilate (PRA). In Mycobacterium leprae (strain Br4923), this protein is Anthranilate phosphoribosyltransferase.